We begin with the raw amino-acid sequence, 355 residues long: Peptide chain release factor 1 (355 aa).

An N5-methylglutamine modification is found at Gln233.

This sequence belongs to the prokaryotic/mitochondrial release factor family. Post-translationally, methylated by PrmC. Methylation increases the termination efficiency of RF1.

The protein resides in the cytoplasm. Functionally, peptide chain release factor 1 directs the termination of translation in response to the peptide chain termination codons UAG and UAA. This Caldicellulosiruptor saccharolyticus (strain ATCC 43494 / DSM 8903 / Tp8T 6331) protein is Peptide chain release factor 1.